Reading from the N-terminus, the 150-residue chain is Leukotriene C4 synthase (150 aa).

Topologically, residues M1–A6 are cytoplasmic. Residues L7 to I27 form a helical membrane-spanning segment. Residues S28–R48 are Lumenal-facing. R30 serves as a coordination point for glutathione. R31 acts as the Proton donor in catalysis. The residue at position 36 (S36) is a Phosphoserine. A helical transmembrane segment spans residues V49–V69. Residues R51–N55 and E58–Y59 each bind glutathione. At A70–F73 the chain is on the cytoplasmic side. The chain crosses the membrane as a helical span at residues F74–F94. Y93–Y97 contacts glutathione. Topologically, residues Q95–R104 are lumenal. R104 acts as the Proton acceptor in catalysis. The chain crosses the membrane as a helical span at residues L105 to L124. Topologically, residues G125 to A150 are cytoplasmic.

This sequence belongs to the MAPEG family. In terms of assembly, homotrimer. Interacts with ALOX5AP and ALOX5. In terms of processing, phosphorylation at Ser-36 by RPS6KB1 inhibits the leukotriene-C4 synthase activity.

The protein localises to the nucleus outer membrane. It is found in the endoplasmic reticulum membrane. Its subcellular location is the nucleus membrane. The enzyme catalyses leukotriene C4 = leukotriene A4 + glutathione. It catalyses the reaction (13S,14S)-epoxy-(4Z,7Z,9E,11E,16Z,19Z)-docosahexaenoate + glutathione = (13R)-S-glutathionyl-(14S)-hydroxy-(4Z,7Z,9E,11E,16Z,19Z)-docosahexaenoate. Its pathway is lipid metabolism; leukotriene C4 biosynthesis. Its activity is regulated as follows. Inhibited by MK886. Functionally, catalyzes the conjugation of leukotriene A4 with reduced glutathione (GSH) to form leukotriene C4 with high specificity. Can also catalyze the transfer of a glutathionyl group from glutathione (GSH) to 13(S),14(S)-epoxy-docosahexaenoic acid to form maresin conjugate in tissue regeneration 1 (MCTR1), a bioactive lipid mediator that possess potent anti-inflammatory and proresolving actions. The sequence is that of Leukotriene C4 synthase (Ltc4s) from Rattus norvegicus (Rat).